The sequence spans 120 residues: NAD(P)H-quinone oxidoreductase subunit 3, chloroplastic (120 aa).

The next 3 membrane-spanning stretches (helical) occupy residues 9–29 (IFWA…TISG), 64–84 (MFAL…PWAM), and 88–108 (VLGI…IVGS).

The protein belongs to the complex I subunit 3 family. As to quaternary structure, NDH is composed of at least 16 different subunits, 5 of which are encoded in the nucleus.

The protein localises to the plastid. It is found in the chloroplast thylakoid membrane. The catalysed reaction is a plastoquinone + NADH + (n+1) H(+)(in) = a plastoquinol + NAD(+) + n H(+)(out). It carries out the reaction a plastoquinone + NADPH + (n+1) H(+)(in) = a plastoquinol + NADP(+) + n H(+)(out). Its function is as follows. NDH shuttles electrons from NAD(P)H:plastoquinone, via FMN and iron-sulfur (Fe-S) centers, to quinones in the photosynthetic chain and possibly in a chloroplast respiratory chain. The immediate electron acceptor for the enzyme in this species is believed to be plastoquinone. Couples the redox reaction to proton translocation, and thus conserves the redox energy in a proton gradient. This chain is NAD(P)H-quinone oxidoreductase subunit 3, chloroplastic, found in Lotus japonicus (Lotus corniculatus var. japonicus).